The chain runs to 150 residues: Troponin C, isotype gamma (150 aa).

Met-1 carries the N-acetylmethionine modification. EF-hand domains are found at residues 7–42 (EQLS…MGVK), 43–78 (ISEK…FLIE), 83–118 (ALKA…LDNR), and 119–150 (LTED…MMSG). Ca(2+)-binding residues include Asp-56, Asp-58, Ser-60, Glu-62, and Glu-67. Ca(2+) contacts are provided by Asp-132, Asp-134, Ser-136, Thr-138, and Glu-143.

It belongs to the troponin C family.

In terms of biological role, troponin is the central regulatory protein of striated muscle contraction. Tn consists of three components: Tn-I which is the inhibitor of actomyosin ATPase, Tn-T which contains the binding site for tropomyosin and Tn-C. The binding of calcium to Tn-C abolishes the inhibitory action of Tn on actin filaments. The polypeptide is Troponin C, isotype gamma (Astacus leptodactylus (Turkish narrow-clawed crayfish)).